A 157-amino-acid chain; its full sequence is Phosphopantetheine adenylyltransferase (157 aa).

A substrate-binding site is contributed by serine 9. ATP is bound by residues 9–10 and histidine 17; that span reads SF. The substrate site is built by lysine 41, valine 73, and lysine 87. ATP is bound by residues 88 to 90, glutamate 98, and 122 to 128; these read GLR and YSFVSSS.

The protein belongs to the bacterial CoaD family. Homohexamer. Mg(2+) is required as a cofactor.

It is found in the cytoplasm. It carries out the reaction (R)-4'-phosphopantetheine + ATP + H(+) = 3'-dephospho-CoA + diphosphate. It participates in cofactor biosynthesis; coenzyme A biosynthesis; CoA from (R)-pantothenate: step 4/5. Its function is as follows. Reversibly transfers an adenylyl group from ATP to 4'-phosphopantetheine, yielding dephospho-CoA (dPCoA) and pyrophosphate. This chain is Phosphopantetheine adenylyltransferase, found in Mycobacterium marinum (strain ATCC BAA-535 / M).